The primary structure comprises 361 residues: Deoxyhypusine hydroxylase (361 aa).

HEAT-like PBS-type repeat units lie at residues 59 to 85, 94 to 120, 183 to 211, and 216 to 242; these read LKHELAYVLGQLLNTRALPTLSRVLEN, VRHEAAEALGAIGAEESLPILRKYMQD, QRYRAMFALRDFGAGSKEAVEALADGFRD, and FRHEIAYIFGQLSSPYSIPSLLSRLRD. Residues His-61, Glu-62, His-96, and Glu-97 each coordinate Fe cation. Residues His-218, Glu-219, His-251, and Glu-252 each coordinate Fe cation.

Belongs to the deoxyhypusine hydroxylase family. It depends on Fe(2+) as a cofactor.

It is found in the cytoplasm. The protein resides in the nucleus. The enzyme catalyses [eIF5A protein]-deoxyhypusine + AH2 + O2 = [eIF5A protein]-hypusine + A + H2O. It functions in the pathway protein modification; eIF5A hypusination. Functionally, catalyzes the hydroxylation of the N(6)-(4-aminobutyl)-L-lysine intermediate to form hypusine, an essential post-translational modification only found in mature eIF-5A factor. This is Deoxyhypusine hydroxylase from Cryptococcus neoformans var. neoformans serotype D (strain B-3501A) (Filobasidiella neoformans).